The following is a 144-amino-acid chain: Peptidyl-Asp metalloendopeptidase (144 aa).

H64 contributes to the Zn(2+) binding site. E65 is an active-site residue. Position 68 (H68) interacts with Zn(2+).

The protein belongs to the peptidase M72 family. Requires Zn(2+) as cofactor.

The enzyme catalyses Cleavage of Xaa-|-Asp, Xaa-|-Glu and Xaa-|-cysteic acid bonds.. Its function is as follows. Metalloprotease, specifically cleaves on the N-terminal side of aspartyl, glutamyl and cysteic acid residues. In Pseudomonas fragi, this protein is Peptidyl-Asp metalloendopeptidase.